The chain runs to 172 residues: 3-hydroxydecanoyl-[acyl-carrier-protein] dehydratase (172 aa).

H71 is a catalytic residue.

Belongs to the thioester dehydratase family. FabA subfamily. In terms of assembly, homodimer.

It is found in the cytoplasm. It carries out the reaction a (3R)-hydroxyacyl-[ACP] = a (2E)-enoyl-[ACP] + H2O. The catalysed reaction is (3R)-hydroxydecanoyl-[ACP] = (2E)-decenoyl-[ACP] + H2O. The enzyme catalyses (2E)-decenoyl-[ACP] = (3Z)-decenoyl-[ACP]. The protein operates within lipid metabolism; fatty acid biosynthesis. In terms of biological role, necessary for the introduction of cis unsaturation into fatty acids. Catalyzes the dehydration of (3R)-3-hydroxydecanoyl-ACP to E-(2)-decenoyl-ACP and then its isomerization to Z-(3)-decenoyl-ACP. Can catalyze the dehydratase reaction for beta-hydroxyacyl-ACPs with saturated chain lengths up to 16:0, being most active on intermediate chain length. In Blochmanniella pennsylvanica (strain BPEN), this protein is 3-hydroxydecanoyl-[acyl-carrier-protein] dehydratase.